The following is a 482-amino-acid chain: Proline--tRNA ligase (482 aa).

It belongs to the class-II aminoacyl-tRNA synthetase family. ProS type 3 subfamily. As to quaternary structure, homodimer.

The protein localises to the cytoplasm. It carries out the reaction tRNA(Pro) + L-proline + ATP = L-prolyl-tRNA(Pro) + AMP + diphosphate. In terms of biological role, catalyzes the attachment of proline to tRNA(Pro) in a two-step reaction: proline is first activated by ATP to form Pro-AMP and then transferred to the acceptor end of tRNA(Pro). In Mycoplasmopsis synoviae (strain 53) (Mycoplasma synoviae), this protein is Proline--tRNA ligase.